The sequence spans 303 residues: Taste receptor type 2 member 13 (303 aa).

Over 1–7 the chain is Extracellular; sequence MESALPS. The helical transmembrane segment at 8–28 threads the bilayer; that stretch reads IFTLVIIAEFIIGNLSNGFIV. Residues 29–55 are Cytoplasmic-facing; it reads LINCIDWVSKRELSSVDKLLIILAISR. A helical membrane pass occupies residues 56-76; sequence IGLIWEILVSWFLALHSLAIF. The Extracellular segment spans residues 77 to 85; sequence VSGTGLRIM. Residues 86–106 traverse the membrane as a helical segment; sequence IFSWIVSNHFNLWLATILSIF. The Cytoplasmic segment spans residues 107 to 128; it reads YLLKIASFSSPAFLYLKRRVNK. A helical transmembrane segment spans residues 129-149; sequence VILMILLGTLVFLFLNLIQIN. The Extracellular segment spans residues 150–184; it reads MLIKDWLDRYERNTTWNFSMSDFETFSVSVRFTMT. N-linked (GlcNAc...) asparagine glycans are attached at residues Asn-162 and Asn-166. A helical transmembrane segment spans residues 185-205; the sequence is MFSLTPFTVAFISFLLLVFSL. Residues 206–232 lie on the Cytoplasmic side of the membrane; that stretch reads QKHLQKMQLNYKGHRDPRTKVHTNALK. Residues 233 to 253 form a helical membrane-spanning segment; that stretch reads IVISFLLFYASFFLSILISWI. Topologically, residues 254–261 are extracellular; the sequence is SELYQNTV. The chain crosses the membrane as a helical span at residues 262-282; the sequence is IYMLCETIGAFYPSSHSFLLI. The Cytoplasmic portion of the chain corresponds to 283-303; it reads LGNAKLRQAFLLVAAKVWAKR.

It belongs to the G-protein coupled receptor T2R family.

Its subcellular location is the membrane. Functionally, receptor that may play a role in the perception of bitterness and is gustducin-linked. May play a role in sensing the chemical composition of the gastrointestinal content. The activity of this receptor may stimulate alpha gustducin, mediate PLC-beta-2 activation and lead to the gating of TRPM5. In Pan paniscus (Pygmy chimpanzee), this protein is Taste receptor type 2 member 13 (TAS2R13).